Reading from the N-terminus, the 215-residue chain is Adenylate kinase (215 aa).

10–15 (GAGKGT) serves as a coordination point for ATP. The interval 30–59 (STGDMFRKAIKDETDLGKEAKSYMDRGELV) is NMP. AMP is bound by residues T31, R36, 57–59 (ELV), 85–88 (GFPR), and Q92. The LID stretch occupies residues 126-163 (GRRICEKCGTTYHLVFNPPKVDGICDIDGGKLYQREDD). R127 contributes to the ATP binding site. 2 residues coordinate Zn(2+): C130 and C133. 136–137 (TY) provides a ligand contact to ATP. Zn(2+) contacts are provided by C150 and D153. Positions 160 and 171 each coordinate AMP. An ATP-binding site is contributed by K199.

The protein belongs to the adenylate kinase family. As to quaternary structure, monomer.

The protein localises to the cytoplasm. It catalyses the reaction AMP + ATP = 2 ADP. It participates in purine metabolism; AMP biosynthesis via salvage pathway; AMP from ADP: step 1/1. Catalyzes the reversible transfer of the terminal phosphate group between ATP and AMP. Plays an important role in cellular energy homeostasis and in adenine nucleotide metabolism. This chain is Adenylate kinase, found in Staphylococcus epidermidis (strain ATCC 35984 / DSM 28319 / BCRC 17069 / CCUG 31568 / BM 3577 / RP62A).